The following is a 331-amino-acid chain: DNA-directed RNA polymerase subunit alpha (331 aa).

The alpha N-terminal domain (alpha-NTD) stretch occupies residues 1 to 233 (MVREEIAVST…DLFLPFLHAE (233 aa)). Residues 268 to 331 (ALKRVFIDQS…GILQKRFAID (64 aa)) are alpha C-terminal domain (alpha-CTD).

It belongs to the RNA polymerase alpha chain family. As to quaternary structure, in plastids the minimal PEP RNA polymerase catalytic core is composed of four subunits: alpha, beta, beta', and beta''. When a (nuclear-encoded) sigma factor is associated with the core the holoenzyme is formed, which can initiate transcription.

Its subcellular location is the plastid. The protein localises to the chloroplast. It carries out the reaction RNA(n) + a ribonucleoside 5'-triphosphate = RNA(n+1) + diphosphate. Functionally, DNA-dependent RNA polymerase catalyzes the transcription of DNA into RNA using the four ribonucleoside triphosphates as substrates. The chain is DNA-directed RNA polymerase subunit alpha from Illicium oligandrum (Star anise).